The chain runs to 403 residues: 4-hydroxy-3-methylbut-2-enyl diphosphate reductase (403 aa).

Cys66 serves as a coordination point for [4Fe-4S] cluster. Residue His96 coordinates (2E)-4-hydroxy-3-methylbut-2-enyl diphosphate. Residue His96 coordinates dimethylallyl diphosphate. Position 96 (His96) interacts with isopentenyl diphosphate. Cys157 lines the [4Fe-4S] cluster pocket. Residue His185 participates in (2E)-4-hydroxy-3-methylbut-2-enyl diphosphate binding. A dimethylallyl diphosphate-binding site is contributed by His185. Isopentenyl diphosphate is bound at residue His185. The active-site Proton donor is Glu187. Thr250 provides a ligand contact to (2E)-4-hydroxy-3-methylbut-2-enyl diphosphate. Cys288 is a binding site for [4Fe-4S] cluster. (2E)-4-hydroxy-3-methylbut-2-enyl diphosphate contacts are provided by Ser317, Ser318, Asn319, and Ser379. 4 residues coordinate dimethylallyl diphosphate: Ser317, Ser318, Asn319, and Ser379. Positions 317, 318, 319, and 379 each coordinate isopentenyl diphosphate.

This sequence belongs to the IspH family. [4Fe-4S] cluster serves as cofactor.

It carries out the reaction isopentenyl diphosphate + 2 oxidized [2Fe-2S]-[ferredoxin] + H2O = (2E)-4-hydroxy-3-methylbut-2-enyl diphosphate + 2 reduced [2Fe-2S]-[ferredoxin] + 2 H(+). It catalyses the reaction dimethylallyl diphosphate + 2 oxidized [2Fe-2S]-[ferredoxin] + H2O = (2E)-4-hydroxy-3-methylbut-2-enyl diphosphate + 2 reduced [2Fe-2S]-[ferredoxin] + 2 H(+). It participates in isoprenoid biosynthesis; dimethylallyl diphosphate biosynthesis; dimethylallyl diphosphate from (2E)-4-hydroxy-3-methylbutenyl diphosphate: step 1/1. The protein operates within isoprenoid biosynthesis; isopentenyl diphosphate biosynthesis via DXP pathway; isopentenyl diphosphate from 1-deoxy-D-xylulose 5-phosphate: step 6/6. Catalyzes the conversion of 1-hydroxy-2-methyl-2-(E)-butenyl 4-diphosphate (HMBPP) into a mixture of isopentenyl diphosphate (IPP) and dimethylallyl diphosphate (DMAPP). Acts in the terminal step of the DOXP/MEP pathway for isoprenoid precursor biosynthesis. The sequence is that of 4-hydroxy-3-methylbut-2-enyl diphosphate reductase from Picosynechococcus sp. (strain ATCC 27264 / PCC 7002 / PR-6) (Agmenellum quadruplicatum).